The primary structure comprises 73 residues: Small ribosomal subunit protein bS18 (73 aa).

The protein belongs to the bacterial ribosomal protein bS18 family. In terms of assembly, part of the 30S ribosomal subunit. Forms a tight heterodimer with protein bS6.

Binds as a heterodimer with protein bS6 to the central domain of the 16S rRNA, where it helps stabilize the platform of the 30S subunit. The chain is Small ribosomal subunit protein bS18 from Prochlorococcus marinus (strain SARG / CCMP1375 / SS120).